A 208-amino-acid polypeptide reads, in one-letter code: Putative 3-methyladenine DNA glycosylase (208 aa).

Belongs to the DNA glycosylase MPG family.

The chain is Putative 3-methyladenine DNA glycosylase from Nitrobacter winogradskyi (strain ATCC 25391 / DSM 10237 / CIP 104748 / NCIMB 11846 / Nb-255).